Consider the following 79-residue polypeptide: Sec-independent protein translocase protein TatA (79 aa).

A helical membrane pass occupies residues 1–21; it reads MGGWSSPSHWLIILLIVVLLF. A compositionally biased stretch (basic and acidic residues) spans 52-61; it reads KNTQKIEENK. Residues 52-79 are disordered; that stretch reads KNTQKIEENKNTTNNTSADASIDKTKKA.

This sequence belongs to the TatA/E family. In terms of assembly, the Tat system comprises two distinct complexes: a TatABC complex, containing multiple copies of TatA, TatB and TatC subunits, and a separate TatA complex, containing only TatA subunits. Substrates initially bind to the TatABC complex, which probably triggers association of the separate TatA complex to form the active translocon.

Its subcellular location is the cell inner membrane. In terms of biological role, part of the twin-arginine translocation (Tat) system that transports large folded proteins containing a characteristic twin-arginine motif in their signal peptide across membranes. TatA could form the protein-conducting channel of the Tat system. The protein is Sec-independent protein translocase protein TatA of Campylobacter jejuni subsp. jejuni serotype O:6 (strain 81116 / NCTC 11828).